Here is a 282-residue protein sequence, read N- to C-terminus: uncharacterized protein (282 aa).

Helical transmembrane passes span W130–L150, S170–A190, A191–V211, and I223–A243. Residues D263–A282 are disordered.

It is found in the cell membrane. This is an uncharacterized protein from Mycobacterium tuberculosis (strain CDC 1551 / Oshkosh).